The sequence spans 517 residues: Rop guanine nucleotide exchange factor 9 (517 aa).

2 disordered regions span residues 16-76 and 428-517; these read NLDR…SETE and GEET…KDRH. Over residues 39–63 the composition is skewed to polar residues; the sequence is MPESQTQDSLGGSPVETSRPMTSRL. A PRONE domain is found at 65–429; the sequence is SRRQDKQQSE…SLARKQCTGE (365 aa). A compositionally biased stretch (basic and acidic residues) spans 66–76; it reads RRQDKQQSETE. The span at 440-452 shows a compositional bias: polar residues; it reads ETDSASAGSSNYS.

Interacts with ARAC11/ROP1 and ARAC10/ROP11. Interacts with PRK6. Expressed in pollen grains and pollen tubes.

The protein localises to the cell membrane. Its function is as follows. Guanine-nucleotide exchange factor (GEF) that acts as an activator of Rop (Rho of plants) GTPases by promoting the exchange of GDP for GTP. This Arabidopsis thaliana (Mouse-ear cress) protein is Rop guanine nucleotide exchange factor 9.